The sequence spans 1818 residues: Nestin (1818 aa).

Residues 1-14 form a coil 1B region; the sequence is WREKLEAEVQRQNL. In terms of domain architecture, IF rod spans 1–135; the sequence is WREKLEAEVQ…TLLEAENSRL (135 aa). Residues 15–17 form a linker 2 region; it reads YQE. The coil 2B stretch occupies residues 18 to 135; the sequence is RVAHMESSLG…TLLEAENSRL (118 aa). Phosphoserine is present on Ser-133. Residues 136–1818 form a tail region; it reads QTPGRSSQAS…DRDSWSSGED (1683 aa). 2 positions are modified to phosphothreonine: Thr-137 and Thr-160. Ser-180 bears the Phosphoserine mark. Position 210 is a phosphothreonine (Thr-210). 4 disordered regions span residues 266 to 309, 336 to 355, 377 to 451, and 480 to 787; these read EEAG…GSSI, AQET…SQGP, HETP…SPEG, and AFKK…EEDQ. Ser-288 is modified (phosphoserine). The segment covering 292–303 has biased composition (basic and acidic residues); the sequence is PVLEAKDGDSTE. The segment covering 382–398 has biased composition (polar residues); that stretch reads KENCNSLRSVDENQGTL. Phosphoserine occurs at positions 390 and 400. 2 stretches are compositionally biased toward basic and acidic residues: residues 400–427 and 434–443; these read SPEE…EKGV and LGKEDPRIED. Ser-448 carries the post-translational modification Phosphoserine. Over residues 495-508 the composition is skewed to basic and acidic residues; the sequence is EIQRVERLIEKEGQ. Ser-513 bears the Phosphoserine mark. Basic and acidic residues-rich tracts occupy residues 521-536 and 565-586; these read TDRP…LKPV and TDRP…KEGQ. Residue Ser-591 is modified to Phosphoserine. Composition is skewed to basic and acidic residues over residues 599-614, 643-664, and 711-732; these read TDRP…LKPV and TDRP…KEGQ. Residue Ser-737 is modified to Phosphoserine. The span at 744-773 shows a compositional bias: basic and acidic residues; the sequence is ETYRLLEKENGEPLKPVEEEDQRVERLIEK. Phosphoserine occurs at positions 803 and 824. The tract at residues 866-900 is disordered; that stretch reads ESLLKKGTQESLESHEDRNQETQDPQRFLEEEGQG. Residues 868-886 show a composition bias toward basic and acidic residues; the sequence is LLKKGTQESLESHEDRNQE. Residues Ser-915 and Ser-957 each carry the phosphoserine modification. Residues 945 to 998 form a disordered region; sequence SLLERESQDSGKSLEGQEAFRCLGKEDPESLQFPEVQDQEIQRSLQQETQQTLG. Residues 986–997 are compositionally biased toward polar residues; it reads QRSLQQETQQTL. Lys-1043 participates in a covalent cross-link: Glycyl lysine isopeptide (Lys-Gly) (interchain with G-Cter in SUMO1); alternate. A Glycyl lysine isopeptide (Lys-Gly) (interchain with G-Cter in SUMO2); alternate cross-link involves residue Lys-1043. 7 positions are modified to phosphoserine: Ser-1052, Ser-1063, Ser-1073, Ser-1123, Ser-1134, Ser-1162, and Ser-1238. Disordered stretches follow at residues 1134 to 1262 and 1334 to 1818; these read SPEA…LEGQ and HPSL…SGED. Basic and acidic residues-rich tracts occupy residues 1342-1361 and 1401-1416; these read VEAK…KEAG and ASDH…RPSE. The segment covering 1490–1505 has biased composition (acidic residues); it reads QDWEESREESEADELG. Ser-1495, Ser-1499, and Ser-1523 each carry phosphoserine. Acidic residues predominate over residues 1570–1579; it reads LSSEEFEDLG. A phosphoserine mark is found at Ser-1614 and Ser-1623. Positions 1616-1636 are enriched in acidic residues; the sequence is GFADEEESGEEGEEEEHEDGT. Residues 1686–1697 show a composition bias toward polar residues; that stretch reads GLETESQDSAEP. 5 positions are modified to phosphoserine: Ser-1698, Ser-1700, Ser-1791, Ser-1814, and Ser-1815. The span at 1698 to 1708 shows a compositional bias: low complexity; that stretch reads SGSEVSESVSS.

Belongs to the intermediate filament family. In terms of assembly, interacts with FHOD3. Forms homodimers and homotetramers in vitro. In mixtures with other intermediate filament proteins such as vimentin and alpha-internexin, preferentially forms heterodimers which can assemble to form intermediate filaments if nestin does not exceed 25%. Constitutively phosphorylated. This increases during mitosis when the cytoplasmic intermediate filament network is reorganized.

Its function is as follows. Required for brain and eye development. Promotes the disassembly of phosphorylated vimentin intermediate filaments (IF) during mitosis and may play a role in the trafficking and distribution of IF proteins and other cellular factors to daughter cells during progenitor cell division. Required for survival, renewal and mitogen-stimulated proliferation of neural progenitor cells. The sequence is that of Nestin from Mesocricetus auratus (Golden hamster).